We begin with the raw amino-acid sequence, 598 residues long: Cytochrome P450 monooxygenase phmB (598 aa).

A helical membrane pass occupies residues 107–127 (VAAKIAALLFVAGLFWAVSVL). N-linked (GlcNAc...) asparagine glycosylation is found at Asn171, Asn428, and Asn494. Cys542 is a heme binding site. Asn549 and Asn581 each carry an N-linked (GlcNAc...) asparagine glycan.

Belongs to the cytochrome P450 family. The cofactor is heme.

The protein localises to the membrane. It functions in the pathway mycotoxin biosynthesis. Its function is as follows. Cytochrome P450 monooxygenase; part of the gene cluster that mediates the biosynthesis of the mycotoxins phomacins, leucine-derived cytochalasans with potent actin polymerization-inhibitory activities and monocot-specific antigerminative activities. The first step in the pathway is catalyzed by the hybrid PKS-NRPS phmA, assisted by the enoyl reductase phmE, that are responsible for fusion of the leucine precursor and the polyketide backbone to produce a 2-pyrrolidone intermediate. The polyketide synthase module (PKS) of phmA is responsible for the synthesis of the polyketide backbone and the downstream nonribosomal peptide synthetase (NRPS) amidates the carboxyl end of the polyketide with the leucine precursor. Because phmA lacks a designated enoylreductase (ER) domain, the required activity is provided the enoyl reductase phmE. Reduction by the hydrolyase phmG, followed by dehydration and intra-molecular Diels-Alder cyclization by the Diels-Alderase phmD then yield the required isoindolone-fused macrocycle. A number of oxidative steps catalyzed by the tailoring cytochrome P450 monooxygenase phmB, the FAD-linked oxidoreductase phmC and the short-chain dehydrogenase/reductase phmF, are further required to afford the final products, phomacin D and phomacin E. The sequence is that of Cytochrome P450 monooxygenase phmB from Phaeosphaeria nodorum (strain SN15 / ATCC MYA-4574 / FGSC 10173) (Glume blotch fungus).